A 1311-amino-acid chain; its full sequence is Transcriptional regulator ATRX homolog (1311 aa).

A disordered region spans residues 1–384; that stretch reads MGKKNPNARH…KQKNKRKHIR (384 aa). Over residues 28-40 the composition is skewed to basic and acidic residues; it reads SRRESATESKSAS. Positions 61 to 83 are enriched in low complexity; that stretch reads KASGKATVSSSSDSDQAVANSSA. Over residues 114–125 the composition is skewed to polar residues; it reads RGSQQKNVTIND. 2 positions are modified to phosphoserine: S126 and S127. Residues 155 to 166 show a composition bias toward acidic residues; that stretch reads SDSEEVDEEEES. The span at 181–202 shows a compositional bias: basic and acidic residues; sequence KPEKNSSKASKESIEKRQKAQK. Residues 219 to 237 show a composition bias toward low complexity; it reads RRGSLSSERSSRASSSRAE. Basic residues predominate over residues 241-265; that stretch reads RPKRCVVRLKRVSLPKTKPAQKPKK. A phosphoserine mark is found at S267, S268, and S270. Over residues 290–306 the composition is skewed to acidic residues; that stretch reads EADSDYEAPAAEEEEEE. Residues S336, S338, S342, and S343 each carry the phosphoserine modification. Positions 336–351 are enriched in basic and acidic residues; the sequence is SESDKGSSDFEPEEKQ. Basic residues predominate over residues 352 to 361; it reads KKKGRKRIKK. A Helicase ATP-binding domain is found at 476 to 664; the sequence is ESQEKPGSGC…YCMIQFVKPN (189 aa). 489–496 provides a ligand contact to ATP; the sequence is HCMGLGKT. The DEGH box motif lies at 615-618; the sequence is DEGH. The segment at 837–878 is disordered; the sequence is ASSGKVKKRKTRNGNAGGGDSDSDLEMLGGLGGGSSVQKDDP. S857 and S859 each carry phosphoserine. Residues 905–1085 enclose the Helicase C-terminal domain; sequence RLLQQCEAIG…SRHYNQTDLM (181 aa). A disordered region spans residues 1285 to 1311; the sequence is MAGGSVAHGPPAAPAPGFEPDKVYEID.

The protein belongs to the SNF2/RAD54 helicase family.

It localises to the nucleus. Its subcellular location is the chromosome. It catalyses the reaction ATP + H2O = ADP + phosphate + H(+). In terms of biological role, global transcriptional regulator. Modifies gene expression by affecting chromatin. This is Transcriptional regulator ATRX homolog (XNP) from Drosophila melanogaster (Fruit fly).